A 234-amino-acid polypeptide reads, in one-letter code: Demethylmenaquinone methyltransferase (234 aa).

Residues threonine 58, aspartate 79, and 106–107 each bind S-adenosyl-L-methionine; that span reads NA.

Belongs to the class I-like SAM-binding methyltransferase superfamily. MenG/UbiE family.

It catalyses the reaction a 2-demethylmenaquinol + S-adenosyl-L-methionine = a menaquinol + S-adenosyl-L-homocysteine + H(+). It functions in the pathway quinol/quinone metabolism; menaquinone biosynthesis; menaquinol from 1,4-dihydroxy-2-naphthoate: step 2/2. Functionally, methyltransferase required for the conversion of demethylmenaquinol (DMKH2) to menaquinol (MKH2). This chain is Demethylmenaquinone methyltransferase, found in Geobacillus stearothermophilus (Bacillus stearothermophilus).